Consider the following 740-residue polypeptide: Ethylene receptor 1 (740 aa).

Transmembrane regions (helical) follow at residues 23-43 (ISDF…IYFV), 53-73 (WVLV…LINL), and 92-112 (VLTA…IPDL). 2 residues coordinate Cu cation: Cys-65 and His-69. One can recognise a GAF domain in the interval 158 to 307 (DRHTILKTTL…VVADQVAVAL (150 aa)). A Histidine kinase domain is found at 350 to 588 (VMNHEMRTPM…TFIVKLGIAE (239 aa)). Phosphohistidine; by autocatalysis is present on His-353. One can recognise a Response regulatory domain in the interval 614-731 (KVLVMDDNGV…KMRSVLSELI (118 aa)). Asp-662 is subject to 4-aspartylphosphate.

The protein belongs to the ethylene receptor family. Homodimer; disulfide-linked. It depends on Cu cation as a cofactor. In terms of processing, activation probably requires a transfer of a phosphate group between a His in the transmitter domain and an Asp of the receiver domain.

Its subcellular location is the endoplasmic reticulum membrane. It catalyses the reaction ATP + protein L-histidine = ADP + protein N-phospho-L-histidine.. Functionally, may act early in the ethylene signal transduction pathway, possibly as an ethylene receptor, or as a regulator of the pathway. This chain is Ethylene receptor 1 (ETR1), found in Cucumis sativus (Cucumber).